The following is a 248-amino-acid chain: Small ribosomal subunit protein uS3 (248 aa).

The KH type-2 domain maps to I39–P108. The interval K212–E248 is disordered. A compositionally biased stretch (basic and acidic residues) spans R221 to P234. Residues S235–E248 show a composition bias toward basic residues.

This sequence belongs to the universal ribosomal protein uS3 family. As to quaternary structure, part of the 30S ribosomal subunit. Forms a tight complex with proteins S10 and S14.

In terms of biological role, binds the lower part of the 30S subunit head. Binds mRNA in the 70S ribosome, positioning it for translation. The sequence is that of Small ribosomal subunit protein uS3 from Deinococcus geothermalis (strain DSM 11300 / CIP 105573 / AG-3a).